The following is a 73-amino-acid chain: Small ribosomal subunit protein bS21 (73 aa).

Belongs to the bacterial ribosomal protein bS21 family.

This chain is Small ribosomal subunit protein bS21, found in Parvibaculum lavamentivorans (strain DS-1 / DSM 13023 / NCIMB 13966).